Reading from the N-terminus, the 1374-residue chain is DNA-directed RNA polymerase subunit beta (1374 aa).

This sequence belongs to the RNA polymerase beta chain family. The RNAP catalytic core consists of 2 alpha, 1 beta, 1 beta' and 1 omega subunit. When a sigma factor is associated with the core the holoenzyme is formed, which can initiate transcription.

The enzyme catalyses RNA(n) + a ribonucleoside 5'-triphosphate = RNA(n+1) + diphosphate. In terms of biological role, DNA-dependent RNA polymerase catalyzes the transcription of DNA into RNA using the four ribonucleoside triphosphates as substrates. The protein is DNA-directed RNA polymerase subunit beta of Methylobacterium radiotolerans (strain ATCC 27329 / DSM 1819 / JCM 2831 / NBRC 15690 / NCIMB 10815 / 0-1).